A 348-amino-acid polypeptide reads, in one-letter code: Rhodopsin (348 aa).

Methionine 1 is subject to N-acetylmethionine. Residues methionine 1–methionine 36 are Extracellular-facing. 2 N-linked (GlcNAc...) asparagine glycosylation sites follow: asparagine 2 and asparagine 15. Residues phenylalanine 37 to valine 61 form a helical membrane-spanning segment. Topologically, residues threonine 62–asparagine 73 are cytoplasmic. A helical membrane pass occupies residues tyrosine 74 to valine 96. The Extracellular segment spans residues threonine 97–cysteine 110. A disulfide bridge connects residues cysteine 110 and cysteine 187. Residues leucine 111 to isoleucine 133 form a helical membrane-spanning segment. Positions glutamate 134–tyrosine 136 match the 'Ionic lock' involved in activated form stabilization motif. Residues glutamate 134 to histidine 152 lie on the Cytoplasmic side of the membrane. Residues alanine 153–phenylalanine 173 traverse the membrane as a helical segment. The Extracellular segment spans residues glycine 174–serine 202. Zn(2+) is bound at residue glutamate 201. A helical transmembrane segment spans residues phenylalanine 203–glycine 224. At glutamine 225–arginine 252 the chain is on the cytoplasmic side. A helical membrane pass occupies residues methionine 253–tyrosine 274. Over isoleucine 275–isoleucine 286 the chain is Extracellular. Glutamine 279 provides a ligand contact to Zn(2+). The chain crosses the membrane as a helical span at residues phenylalanine 287–methionine 308. At lysine 296 the chain carries N6-(retinylidene)lysine. The Cytoplasmic segment spans residues methionine 309–alanine 348. S-palmitoyl cysteine attachment occurs at residues cysteine 322 and cysteine 323. Positions aspartate 330–alanine 348 are interaction with SAG. At serine 334 the chain carries Phosphoserine. Residues threonine 335 and threonine 336 each carry the phosphothreonine modification. At serine 338 the chain carries Phosphoserine. Phosphothreonine is present on residues threonine 340 and threonine 342. Serine 343 is subject to Phosphoserine.

It belongs to the G-protein coupled receptor 1 family. Opsin subfamily. In terms of assembly, homodimer. May form a complex composed of RHO, GRK1 and RCVRN in a Ca(2+)-dependent manner; RCVRN prevents the interaction between GRK1 and RHO. Interacts with GRK1. Interacts (phosphorylated form) with SAG. Interacts with GNAT1. Interacts with GNAT3. SAG and G-proteins compete for a common binding site. Interacts with PRCD; the interaction promotes PRCD stability. Forms a complex with ASAP1 and ARF4. Forms a complex with ASAP1, RAB11A, Rabin8/RAB3IP, ARF4 and RAB11FIP3; the complex regulates Golgi-to-cilia rhodopsin/RHO transport in photoreceptors. In terms of processing, phosphorylated on some or all of the serine and threonine residues present in the C-terminal region. Post-translationally, contains one covalently linked retinal chromophore. Upon light absorption, the covalently bound 11-cis-retinal is converted to all-trans-retinal. After hydrolysis of the Schiff base and release of the covalently bound all-trans-retinal, active rhodopsin is regenerated by binding of a fresh molecule of 11-cis-retinal.

Its subcellular location is the membrane. The protein resides in the cell projection. It localises to the cilium. The protein localises to the photoreceptor outer segment. In terms of biological role, photoreceptor required for image-forming vision at low light intensity. Required for photoreceptor cell viability after birth. Light-induced isomerization of 11-cis to all-trans retinal triggers a conformational change that activates signaling via G-proteins. Subsequent receptor phosphorylation mediates displacement of the bound G-protein alpha subunit by the arrestin SAG and terminates signaling. This Sminthopsis crassicaudata (Fat-tailed dunnart) protein is Rhodopsin (RHO).